The primary structure comprises 316 residues: Delta(1)-pyrroline-2-carboxylate reductase (316 aa).

It belongs to the ornithine cyclodeaminase/mu-crystallin family. As to quaternary structure, homodimer.

It carries out the reaction L-proline + NAD(+) = 1-pyrroline-2-carboxylate + NADH + H(+). It catalyses the reaction L-proline + NADP(+) = 1-pyrroline-2-carboxylate + NADPH + H(+). Its function is as follows. Catalyzes the reduction of Delta(1)-pyrroline-2-carboxylate (Pyr2C) to L-proline, using preferentially NADPH over NADH as the electron donor. Together with LhpH, is involved in a metabolic pathway that converts trans-3-hydroxy-L-proline (t3LHyp) to L-proline. To a much lesser extent, can also reduce Delta(1)-piperideine-2-carboxylate (Pip2C) to L-pipecolate in vitro; however, this activity has likely no physiological significance in vivo since C.psychrerythraea probably possesses no ability to metabolize D-lysine via the L-pipecolate pathway. Does not show ornithine cyclodeaminase (OCD) activity. This Colwellia psychrerythraea (strain 34H / ATCC BAA-681) (Vibrio psychroerythus) protein is Delta(1)-pyrroline-2-carboxylate reductase.